A 154-amino-acid polypeptide reads, in one-letter code: Deoxyuridine 5'-triphosphate nucleotidohydrolase (154 aa).

Substrate-binding positions include 64–66 (RSG), Asn-77, 81–83 (TVD), and Lys-91.

This sequence belongs to the dUTPase family. As to quaternary structure, homotrimer. The cofactor is Mg(2+).

It carries out the reaction dUTP + H2O = dUMP + diphosphate + H(+). It participates in pyrimidine metabolism; dUMP biosynthesis; dUMP from dCTP (dUTP route): step 2/2. Functionally, this enzyme is involved in nucleotide metabolism: it produces dUMP, the immediate precursor of thymidine nucleotides and it decreases the intracellular concentration of dUTP so that uracil cannot be incorporated into DNA. This Mycolicibacterium gilvum (strain PYR-GCK) (Mycobacterium gilvum (strain PYR-GCK)) protein is Deoxyuridine 5'-triphosphate nucleotidohydrolase.